We begin with the raw amino-acid sequence, 442 residues long: Methylenetetrahydrofolate--tRNA-(uracil-5-)-methyltransferase TrmFO 1 (442 aa).

9–14 (GAGLAG) contributes to the FAD binding site.

This sequence belongs to the MnmG family. TrmFO subfamily. The cofactor is FAD.

The protein localises to the cytoplasm. It catalyses the reaction uridine(54) in tRNA + (6R)-5,10-methylene-5,6,7,8-tetrahydrofolate + NADH + H(+) = 5-methyluridine(54) in tRNA + (6S)-5,6,7,8-tetrahydrofolate + NAD(+). The catalysed reaction is uridine(54) in tRNA + (6R)-5,10-methylene-5,6,7,8-tetrahydrofolate + NADPH + H(+) = 5-methyluridine(54) in tRNA + (6S)-5,6,7,8-tetrahydrofolate + NADP(+). Catalyzes the folate-dependent formation of 5-methyl-uridine at position 54 (M-5-U54) in all tRNAs. The protein is Methylenetetrahydrofolate--tRNA-(uracil-5-)-methyltransferase TrmFO 1 of Mesoplasma florum (strain ATCC 33453 / NBRC 100688 / NCTC 11704 / L1) (Acholeplasma florum).